The sequence spans 554 residues: Dihydroxy-acid dehydratase (554 aa).

D78 is a Mg(2+) binding site. A [2Fe-2S] cluster-binding site is contributed by C119. Mg(2+) is bound by residues D120 and K121. An N6-carboxylysine modification is found at K121. C191 lines the [2Fe-2S] cluster pocket. E442 contacts Mg(2+). Residue S468 is the Proton acceptor of the active site.

It belongs to the IlvD/Edd family. As to quaternary structure, homodimer. Requires [2Fe-2S] cluster as cofactor. It depends on Mg(2+) as a cofactor.

The catalysed reaction is (2R)-2,3-dihydroxy-3-methylbutanoate = 3-methyl-2-oxobutanoate + H2O. The enzyme catalyses (2R,3R)-2,3-dihydroxy-3-methylpentanoate = (S)-3-methyl-2-oxopentanoate + H2O. The protein operates within amino-acid biosynthesis; L-isoleucine biosynthesis; L-isoleucine from 2-oxobutanoate: step 3/4. Its pathway is amino-acid biosynthesis; L-valine biosynthesis; L-valine from pyruvate: step 3/4. In terms of biological role, functions in the biosynthesis of branched-chain amino acids. Catalyzes the dehydration of (2R,3R)-2,3-dihydroxy-3-methylpentanoate (2,3-dihydroxy-3-methylvalerate) into 2-oxo-3-methylpentanoate (2-oxo-3-methylvalerate) and of (2R)-2,3-dihydroxy-3-methylbutanoate (2,3-dihydroxyisovalerate) into 2-oxo-3-methylbutanoate (2-oxoisovalerate), the penultimate precursor to L-isoleucine and L-valine, respectively. The polypeptide is Dihydroxy-acid dehydratase (Thermotoga sp. (strain RQ2)).